The sequence spans 259 residues: MKHSSKIIVFVSFLILTIFIGGCGFINKEDSKEAEIKQNFNKTLSMYPTKNLEDFYDKEGYRDEEFDKDDKGTWIINSKMIVEPKGEEMEARGMVLRINRNTRTAKGNFIIKRITENNKGIPDVKDKKYPVKMEHNKIIPTKQIKDKKLKKEIENFKFFVQYGNFKNLKDYKDGEISYNPNVPSYSAQYQLNNYDNNVKQLRKRYDIPTNQAPKLLLKGTGDLKGSSVGYKHLEFTFVENKKENIYFTDSINFNPSRGN.

Positions Met-1 to Gly-22 are cleaved as a signal peptide. Residue Cys-23 is the site of N-palmitoyl cysteine attachment. The S-diacylglycerol cysteine moiety is linked to residue Cys-23.

Belongs to the staphylococcal tandem lipoprotein family.

The protein localises to the cell membrane. This is an uncharacterized protein from Staphylococcus epidermidis (strain ATCC 35984 / DSM 28319 / BCRC 17069 / CCUG 31568 / BM 3577 / RP62A).